The primary structure comprises 393 residues: Iripin-5 (393 aa).

The N-terminal stretch at 1-16 is a signal peptide; that stretch reads MKTLIVLMCSLVVVWA. 2 N-linked (GlcNAc...) asparagine glycosylation sites follow: Asn-198 and Asn-245.

It belongs to the serpin family. As to expression, highly expressed in female salivary gland during blood feeding. Expressed in female midgut and ovary during blood feeding.

The protein localises to the secreted. Functionally, serine protease inhibitor that modulates blood feeding of ticks on vertebrate species. Inhibits host neutrophil elastase (ELANE) and proteinase 3/myeloblastin (PRTN3). Moderately inhibits host chymase, cathepsin G (CTSG), trypsin and alpha-chymotrypsin. Decreases host neutrophil migration. Decreases nitric oxide production by host macrophages. Decreases host complement activity. This chain is Iripin-5, found in Ixodes ricinus (Common tick).